Consider the following 243-residue polypeptide: MSKKITKKDEVEENILNLINKANRPYNYQMIEAAFPSMGKTQIVKTLKSLGEQGKLTFKEYNKAIIYWRIQDTGPKLDEQGYEIPQESIHDLNRKLDGINRQLEVEQDTLKSLISQSKQLNNQLSDEQIQKEVNQLSTENKELESKLLTFQTKEIMSDKDKQRLDDTIKKARSEWVKRKALFRDILDQVLERSNKKKKDLQEDIGWETDEDLKIQMIPDYSKPLSQQTLSSTNDESPFKKQKK.

Residues 86–153 (QESIHDLNRK…ESKLLTFQTK (68 aa)) are a coiled coil. The segment at 217–243 (IPDYSKPLSQQTLSSTNDESPFKKQKK) is disordered. Residues 223–235 (PLSQQTLSSTNDE) show a composition bias toward polar residues.

It belongs to the HOP2 family.

The protein resides in the nucleus. Functionally, required for proper homologous pairing and efficient cross-over and intragenic recombination during meiosis. This chain is Homologous-pairing protein 2 homolog (hop2), found in Dictyostelium discoideum (Social amoeba).